The following is a 286-amino-acid chain: Phosphoribosylaminoimidazole-succinocarboxamide synthase (286 aa).

Belongs to the SAICAR synthetase family.

The enzyme catalyses 5-amino-1-(5-phospho-D-ribosyl)imidazole-4-carboxylate + L-aspartate + ATP = (2S)-2-[5-amino-1-(5-phospho-beta-D-ribosyl)imidazole-4-carboxamido]succinate + ADP + phosphate + 2 H(+). It participates in purine metabolism; IMP biosynthesis via de novo pathway; 5-amino-1-(5-phospho-D-ribosyl)imidazole-4-carboxamide from 5-amino-1-(5-phospho-D-ribosyl)imidazole-4-carboxylate: step 1/2. This chain is Phosphoribosylaminoimidazole-succinocarboxamide synthase, found in Histophilus somni (strain 2336) (Haemophilus somnus).